We begin with the raw amino-acid sequence, 109 residues long: uncharacterized protein (109 aa).

This sequence to E.coli YtfG C-terminal region.

This is an uncharacterized protein from Haemophilus influenzae (strain ATCC 51907 / DSM 11121 / KW20 / Rd).